Reading from the N-terminus, the 266-residue chain is Vitamin B12-binding protein (266 aa).

Residues 1–22 form the signal peptide; it reads MAKSLFRALVALSFLAPLWLNA. Residues 25 to 266 form the Fe/B12 periplasmic-binding domain; the sequence is RVITLSPANT…QLCNALSQVD (242 aa). Cyanocob(III)alamin-binding positions include Tyr-50 and 242 to 246; that span reads DWFER. A disulfide bridge links Cys-183 with Cys-259.

The protein belongs to the BtuF family. As to quaternary structure, the complex is composed of two ATP-binding proteins (BtuD), two transmembrane proteins (BtuC) and a solute-binding protein (BtuF).

Its subcellular location is the periplasm. Part of the ABC transporter complex BtuCDF involved in vitamin B12 import. Binds vitamin B12 and delivers it to the periplasmic surface of BtuC. The chain is Vitamin B12-binding protein from Escherichia coli O6:H1 (strain CFT073 / ATCC 700928 / UPEC).